The chain runs to 865 residues: Carbohydrate-responsive element-binding protein (865 aa).

2 disordered regions span residues 15–41 (PRVV…AGGL) and 53–77 (MVSS…LADF). Phosphoserine is present on residues S20, S23, and S25. Position 27 is a phosphothreonine (T27). Position 196 is a phosphoserine (S196). Disordered stretches follow at residues 334 to 392 (GILG…TKMP) and 500 to 653 (QPRC…LSRG). The segment covering 351–368 (GMTPLSGNTRLQARNSCS) has biased composition (polar residues). Over residues 515–533 (ASPPTLTSATASPTATATA) the composition is skewed to low complexity. A Phosphoserine; by AMPK modification is found at S568. Residues 583-597 (PPIPAPTPPRPPPGP) are compositionally biased toward pro residues. Phosphoserine occurs at positions 615, 627, and 644. Residues 662 to 716 (NRRITHISAEQKRRFNIKLGFDTLHGLVSTLSAQPSLKVSKATTLQKTAEYILML) enclose the bHLH domain. Positions 716-737 (LQQERAAMQEEAQQLRDEIEEL) are leucine-zipper.

Binds DNA as a heterodimer with TCFL4/MLX. Phosphorylation at Ser-568 by AMPK inactivates the DNA-binding activity.

The protein localises to the nucleus. Transcriptional repressor. Binds to the canonical and non-canonical E box sequences 5'-CACGTG-3'. The chain is Carbohydrate-responsive element-binding protein (Mlxipl) from Rattus norvegicus (Rat).